A 114-amino-acid chain; its full sequence is Small ribosomal subunit protein uS17 (114 aa).

The protein belongs to the universal ribosomal protein uS17 family. As to quaternary structure, part of the 30S ribosomal subunit.

Its function is as follows. One of the primary rRNA binding proteins, it binds specifically to the 5'-end of 16S ribosomal RNA. The sequence is that of Small ribosomal subunit protein uS17 from Saccharolobus solfataricus (strain ATCC 35092 / DSM 1617 / JCM 11322 / P2) (Sulfolobus solfataricus).